The primary structure comprises 573 residues: Poly(ribitol-phosphate) beta-N-acetylglucosaminyltransferase TarS (573 aa).

Residues P9, D41, N68, R76, 92-94 (DSD), R127, and E178 contribute to the UDP-N-acetyl-alpha-D-glucosamine site. D94 contributes to the Mn(2+) binding site. D179 acts as the Proton acceptor in catalysis. UDP-N-acetyl-alpha-D-glucosamine-binding positions include R207 and 211-213 (HMS).

It belongs to the glycosyltransferase 2 family. In terms of assembly, homotrimer. The cofactor is Mn(2+).

It catalyses the reaction 4-O-[(D-ribitylphospho)(n)-di{(2R)-glycerylphospho}]-N-acetyl-beta-D-mannosaminyl-(1-&gt;4)-N-acetyl-alpha-D-glucosaminyl di-trans,octa-cis-undecaprenyl diphosphate + n UDP-N-acetyl-alpha-D-glucosamine = 4-O-([2-N-acetyl-beta-D-glucosaminyl-1-D-ribitylphospho](n)-di{[2R]-1-glycerylphospho})-N-acetyl-beta-D-mannosaminyl-(1-&gt;4)-N-acetyl-alpha-D-glucosaminyl di-trans,octa-cis-undecaprenyl diphosphate + n UDP + n H(+). Its pathway is cell wall biogenesis; poly(ribitol phosphate) teichoic acid biosynthesis. In terms of biological role, attaches beta-O-GlcNAc (beta-O-N-acetyl-D-glucosamine) residues to the C4 position of poly(RboP)-wall teichoic acids (WTAs). Prefers UDP-GlcNAc as a donor substrate and is specific for poly(ribitol phosphate) WTAs. Can also use UDP-Glc and UDP-GalNAc, but not UDP-galactose or UDP-glucuronic acid. Mediates beta-lactam resistance in methicillin resistant Staphylococcus aureus (MRSA) strains. The chain is Poly(ribitol-phosphate) beta-N-acetylglucosaminyltransferase TarS from Staphylococcus aureus (strain MW2).